The following is a 131-amino-acid chain: Small ribosomal subunit protein uS11 (131 aa).

It belongs to the universal ribosomal protein uS11 family. As to quaternary structure, part of the 30S ribosomal subunit. Interacts with proteins S7 and S18. Binds to IF-3.

Located on the platform of the 30S subunit, it bridges several disparate RNA helices of the 16S rRNA. Forms part of the Shine-Dalgarno cleft in the 70S ribosome. In Deinococcus geothermalis (strain DSM 11300 / CIP 105573 / AG-3a), this protein is Small ribosomal subunit protein uS11.